The chain runs to 80 residues: UPF0291 protein LCA_1274 (80 aa).

Residues 59–80 are disordered; that stretch reads EGKEVTPEKVKDIQREKGLRDD.

It belongs to the UPF0291 family.

It localises to the cytoplasm. The polypeptide is UPF0291 protein LCA_1274 (Latilactobacillus sakei subsp. sakei (strain 23K) (Lactobacillus sakei subsp. sakei)).